Reading from the N-terminus, the 300-residue chain is Free fatty acid receptor 1 (300 aa).

Residues 1 to 8 (MDLPPQLS) lie on the Extracellular side of the membrane. A helical transmembrane segment spans residues 9-31 (FALYVSAFALGFPLNLLAIRGAV). Residues 32 to 41 (SHAKLRLTPS) lie on the Cytoplasmic side of the membrane. A helical transmembrane segment spans residues 42–64 (LVYTLHLACSDLLLAITLPLKAV). At 65-79 (EALASGVWPLPLPFC) the chain is on the extracellular side. Cys79 and Cys170 are disulfide-bonded. The helical transmembrane segment at 80–101 (PVFALAHFAPLYAGGGFLAALS) threads the bilayer. Residues 102 to 121 (AGRYLGAAFPFGYQAIRRPC) lie on the Cytoplasmic side of the membrane. Residues 122–142 (YSWGVCVAIWALVLCHLGLAL) traverse the membrane as a helical segment. At 143 to 178 (GLEAPRGWVDNTTSSLGINIPVNGSPVCLEAWDPDS) the chain is on the extracellular side. Asn153 carries an N-linked (GlcNAc...) asparagine glycan. A helical transmembrane segment spans residues 179 to 200 (ARPARLSFSILLFFLPLVITAF). Topologically, residues 201 to 223 (CYVGCLRALVHSGLSHKRKLRAA) are cytoplasmic. Residues 224-248 (WVAGGALLTLLLCLGPYNASNVASF) traverse the membrane as a helical segment. At 249–256 (INPDLEGS) the chain is on the extracellular side. A helical transmembrane segment spans residues 257–279 (WRKLGLITGAWSVVLNPLVTGYL). The Cytoplasmic portion of the chain corresponds to 280–300 (GTGPGQGTICVTRTPRGTIQK).

The protein belongs to the G-protein coupled receptor 1 family. As to expression, expressed abundantly in pancreatic beta cells.

The protein localises to the cell membrane. In terms of biological role, G-protein coupled receptor for medium and long chain saturated and unsaturated fatty acids that plays an important role in glucose homeostasis. Fatty acid binding increases glucose-stimulated insulin secretion, and may also enhance the secretion of glucagon-like peptide 1 (GLP-1). May also play a role in bone homeostasis; receptor signaling activates pathways that inhibit osteoclast differentiation. Ligand binding leads to a conformation change that triggers signaling via G-proteins that activate phospholipase C, leading to an increase of the intracellular calcium concentration. Seems to act through a G(q) and G(i)-mediated pathway. Mediates the anti-inflammatory effects of omega-3 polyunsaturated fatty acids (PUFAs) via inhibition of NLRP3 inflammasome activation. The sequence is that of Free fatty acid receptor 1 (Ffar1) from Rattus norvegicus (Rat).